We begin with the raw amino-acid sequence, 482 residues long: Ubiquitin carboxyl-terminal hydrolase 6 (482 aa).

Positions 2-77 constitute a Ubiquitin-like domain; that stretch reads PTVSVKWQKK…LMMMGTADEI (76 aa). The USP domain occupies 104–478; that stretch reads AGLVNLGNTC…MAYITMYKAR (375 aa). The active-site Nucleophile is the C113. Residues 172–191 form a calmodulin-binding region; that stretch reads SQFWMVLRKKYPQFSQLQNG. Composition is skewed to basic and acidic residues over residues 350-361 and 371-381; these read PRQKLREEEGKK and GSKDSDVKMTD. Residues 350 to 407 form a disordered region; it reads PRQKLREEEGKKLGLQTSAKSGSKDSDVKMTDAEASANGSGESSTVNPQEGTSSEKET. Over residues 382 to 393 the composition is skewed to low complexity; the sequence is AEASANGSGESS. H430 (proton acceptor) is an active-site residue.

It belongs to the peptidase C19 family. Interacts with calmodulin (CaM).

It catalyses the reaction Thiol-dependent hydrolysis of ester, thioester, amide, peptide and isopeptide bonds formed by the C-terminal Gly of ubiquitin (a 76-residue protein attached to proteins as an intracellular targeting signal).. Functionally, recognizes and hydrolyzes the peptide bond at the C-terminal Gly of ubiquitin. Involved in the processing of poly-ubiquitin precursors as well as that of ubiquitinated proteins. This is Ubiquitin carboxyl-terminal hydrolase 6 (UBP6) from Arabidopsis thaliana (Mouse-ear cress).